Consider the following 258-residue polypeptide: MADVVTMKQLLEAGVHFGHQTRRWNPKMAPYIFTQRNGIYIIDLQKTIKMLDDAYNFMKAVAEDGGVFLFVGTKKQAQDSIAEEATRAGQYYVNQRWLGGTLTNWTTIQSRVRRLKQLKEMSEDGTFDVLPKKEVALLTKEMDKLERFLGGIEDMPRIPDVLFVVDPKKEKIAVHEANILGIPVVAMVDTNTDPDPIDVVIPSNDDAIRAIRLIAGAMADAIIEGKQGQDDEETLEVDFKENADGSEEIVSAEENPED.

A disordered region spans residues 226-258 (KQGQDDEETLEVDFKENADGSEEIVSAEENPED). The span at 244 to 258 (DGSEEIVSAEENPED) shows a compositional bias: acidic residues.

The protein belongs to the universal ribosomal protein uS2 family.

This Lactobacillus acidophilus (strain ATCC 700396 / NCK56 / N2 / NCFM) protein is Small ribosomal subunit protein uS2.